Here is a 354-residue protein sequence, read N- to C-terminus: Kelch domain-containing protein 8B (354 aa).

8 Kelch repeats span residues 1–31, 32–79, 81–127, 128–175, 176–222, 224–281, 282–329, and 331–354; these read MSAGGGRAFAWQVFPPMPTCRVYGTVAHQDG, HLLV…VLGK, VLVV…ERDG, MVYA…LHGN, KIYV…MAEG, VFSL…SLGG, HIVA…QAGP, and LFVIGGVAQGPSQAVEALCLRDGV.

It is found in the cytoplasm. It localises to the midbody. Its function is as follows. Involved in pinching off the separated nuclei at the cleavage furrow and in cytokinesis. Required for mitotic integrity and maintenance of chromosomal stability. Protects cells against mitotic errors, centrosomal amplification, micronucleus formation and aneuploidy. Plays a key role of midbody function involving abscission of the daughter cells during cytokinesis and appropriate chromosomal and nuclear segregation into the daughter cells. This chain is Kelch domain-containing protein 8B, found in Homo sapiens (Human).